The following is a 400-amino-acid chain: Argininosuccinate synthase (400 aa).

9-17 serves as a coordination point for ATP; that stretch reads AYSGGLDTS. Residue Tyr-87 coordinates L-citrulline. Gly-117 is an ATP binding site. L-aspartate contacts are provided by Thr-119, Asn-123, and Asp-124. Asn-123 contributes to the L-citrulline binding site. Positions 127, 176, 185, 261, and 273 each coordinate L-citrulline.

This sequence belongs to the argininosuccinate synthase family. Type 1 subfamily. In terms of assembly, homotetramer.

It localises to the cytoplasm. The catalysed reaction is L-citrulline + L-aspartate + ATP = 2-(N(omega)-L-arginino)succinate + AMP + diphosphate + H(+). It participates in amino-acid biosynthesis; L-arginine biosynthesis; L-arginine from L-ornithine and carbamoyl phosphate: step 2/3. In Chlorobium luteolum (strain DSM 273 / BCRC 81028 / 2530) (Pelodictyon luteolum), this protein is Argininosuccinate synthase.